A 135-amino-acid polypeptide reads, in one-letter code: uncharacterized protein (135 aa).

Helical transmembrane passes span 7-25, 29-51, 64-85, and 89-108; these read WSAA…EWTI, ILLT…TGNI, VFIF…EVGI, and ALIF…ISIF.

Belongs to the bacteriophage holin family. Cp-1 holin subfamily.

Its subcellular location is the cell membrane. This is an uncharacterized protein from Halalkalibacterium halodurans (strain ATCC BAA-125 / DSM 18197 / FERM 7344 / JCM 9153 / C-125) (Bacillus halodurans).